Here is a 217-residue protein sequence, read N- to C-terminus: Large ribosomal subunit protein uL3 (217 aa).

The disordered stretch occupies residues 137 to 160 (VSASHGSHRNHRKPGSIGASSTPS).

It belongs to the universal ribosomal protein uL3 family. In terms of assembly, part of the 50S ribosomal subunit. Forms a cluster with proteins L14 and L19.

In terms of biological role, one of the primary rRNA binding proteins, it binds directly near the 3'-end of the 23S rRNA, where it nucleates assembly of the 50S subunit. This Clavibacter michiganensis subsp. michiganensis (strain NCPPB 382) protein is Large ribosomal subunit protein uL3.